The following is a 131-amino-acid chain: Profilin-11 (131 aa).

A disulfide bond links Cys13 and Cys115. Positions 81–97 match the Involved in PIP2 interaction motif; it reads AVIRGKKGSGGITVKKT. At Thr111 the chain carries Phosphothreonine.

This sequence belongs to the profilin family. As to quaternary structure, occurs in many kinds of cells as a complex with monomeric actin in a 1:1 ratio. Post-translationally, phosphorylated by MAP kinases.

It is found in the cytoplasm. Its subcellular location is the cytoskeleton. Functionally, binds to actin and affects the structure of the cytoskeleton. At high concentrations, profilin prevents the polymerization of actin, whereas it enhances it at low concentrations. This is Profilin-11 from Zea mays (Maize).